Reading from the N-terminus, the 134-residue chain is Small ribosomal subunit protein uS9 (134 aa).

Residues 114 to 134 (QKEAKNFGGPGARSKYQKSYR) form a disordered region.

The protein belongs to the universal ribosomal protein uS9 family.

The polypeptide is Small ribosomal subunit protein uS9 (Methanosarcina mazei (strain ATCC BAA-159 / DSM 3647 / Goe1 / Go1 / JCM 11833 / OCM 88) (Methanosarcina frisia)).